Here is a 46-residue protein sequence, read N- to C-terminus: Protein YpdJ (46 aa).

Functionally, may be involved in H(2) production during fermentative growth. In Escherichia coli (strain K12), this protein is Protein YpdJ (ypdJ).